The primary structure comprises 474 residues: Tubulin gamma-1 chain (474 aa).

142–148 (AGGTGSG) contacts GTP.

It belongs to the tubulin family. As to quaternary structure, gamma-tubulin complex is composed of gamma-tubulin and GCP proteins.

The protein localises to the cytoplasm. The protein resides in the cytoskeleton. It is found in the microtubule organizing center. Its subcellular location is the nucleus. It localises to the cell cortex. Its function is as follows. Tubulin is the major constituent of microtubules. The gamma chain is found at microtubule organizing centers (MTOC) such as the spindle poles, suggesting that it is involved in the minus-end nucleation of microtubule assembly. Functionally, gamma-tubulin complex is essential for the control of microtubular network remodeling in the course of initiation and development of giant-feeding cells, and for the successful reproduction of nematodes (e.g. Meloidogyne spp.) in their plant hosts. The sequence is that of Tubulin gamma-1 chain (TUBG1) from Arabidopsis thaliana (Mouse-ear cress).